Here is a 206-residue protein sequence, read N- to C-terminus: Small ribosomal subunit protein uS7 (206 aa).

Residues 1–19 (MSAEDTPEADADAAEESEP) show a composition bias toward acidic residues. Residues 1-25 (MSAEDTPEADADAAEESEPETARAK) are disordered. S2 bears the N-acetylserine mark.

Belongs to the universal ribosomal protein uS7 family. Part of the 30S ribosomal subunit.

Functionally, one of the primary rRNA binding proteins, it binds directly to 16S rRNA where it nucleates assembly of the head domain of the 30S subunit. Is located at the subunit interface close to the decoding center. This Haloarcula marismortui (strain ATCC 43049 / DSM 3752 / JCM 8966 / VKM B-1809) (Halobacterium marismortui) protein is Small ribosomal subunit protein uS7.